The sequence spans 199 residues: Ribonuclease HII (199 aa).

One can recognise an RNase H type-2 domain in the interval 7–196 (PWVCGVDEAG…VRELMANEKD (190 aa)). A divalent metal cation-binding residues include D13, E14, and D105.

The protein belongs to the RNase HII family. Mn(2+) is required as a cofactor. It depends on Mg(2+) as a cofactor.

It localises to the cytoplasm. The catalysed reaction is Endonucleolytic cleavage to 5'-phosphomonoester.. Endonuclease that specifically degrades the RNA of RNA-DNA hybrids. The polypeptide is Ribonuclease HII (Nitrosospira multiformis (strain ATCC 25196 / NCIMB 11849 / C 71)).